We begin with the raw amino-acid sequence, 354 residues long: MAEMKTSPSQDEEAGVVAMQLATSTVLPMILKSAIELDLLNTIAKAGPGNYLSPSDLASKLLLSNPDAPVMLARILRVLATYKVLGCKRGEVEWLYCWTPVCKYLSNNEDGASIAPILLVHQDKVTIKSWYHLTDAVRDGGTAFNKAHDMSIFEYASQDPQFNKAFNRSMRGHSTITMKKILETYKGFEGLKSIVDVGGGTGATLNMIISKYPTIKGINFDLPHVVGDAPSLPGVEHVGGNMFASVPKGDAIFLKWIFHSWGDEECLKILKKCHQALGDNKKVIVAEFILPEDPGGSDSATKSAVHLDAIMLAYVPGGKERTEKEFESLAKRAGFKSFTKVCCAFNTWIMEFSK.

Residue H121 coordinates bergaptol. S-adenosyl-L-homocysteine is bound by residues S174, G198, D221, and K255. Residue H259 coordinates bergaptol. H259 (proton acceptor) is an active-site residue.

Belongs to the class I-like SAM-binding methyltransferase superfamily. Cation-independent O-methyltransferase family. COMT subfamily.

The catalysed reaction is a 5-hydroxyfurocoumarin + S-adenosyl-L-methionine = a 5-methoxyfurocoumarin + S-adenosyl-L-homocysteine + H(+). The enzyme catalyses bergaptol + S-adenosyl-L-methionine = bergapten + S-adenosyl-L-homocysteine. Inhibited by Cu(2+), Ni(2+) and Co(2+). The sequence is that of Bergaptol O-methyltransferase from Ammi majus (Bishop's weed).